Reading from the N-terminus, the 310-residue chain is MSYRGPIGNFGGMPMSSSQGPYSGGAQFRSNQNQSTSGILKQWKHSFEKFASRIEGLTDNAVVYKLKPYIPSLSRFFIVATFYEDSFRILSQWSDQIFYLNKWKHYPYFFVVVFLVVVTVSMLIGASLLVLRKQTNYATGVLCACVISQALVYGLFTGSSFVLRNFSVIGGLLIAFSDSIVQNKTTFGMLPELNSKNDKAKGYLLFAGRILIVLMFIAFTFSKSWFTVVLTIIGTICFAIGYKTKFASIMLGLILTFYNITLNNYWFYNNTKRDFLKYEFYQNLSIIGGLLLVTNTGAGELSVDEKKKIY.

The Cytoplasmic portion of the chain corresponds to methionine 1 to tyrosine 108. Residues glycine 11–asparagine 31 are disordered. A helical membrane pass occupies residues phenylalanine 109–leucine 129. Residues valine 130 to tyrosine 137 are Lumenal-facing. Residues alanine 138–glycine 158 form a helical membrane-spanning segment. Topologically, residues serine 159 to arginine 209 are cytoplasmic. Residues isoleucine 210 to leucine 230 traverse the membrane as a helical segment. The Lumenal segment spans residues threonine 231–lysine 245. Residues phenylalanine 246–tryptophan 266 form a helical membrane-spanning segment. The Cytoplasmic portion of the chain corresponds to phenylalanine 267–tyrosine 310. The short motif at lysine 307–tyrosine 310 is the Di-lysine motif element.

This sequence belongs to the SURF4 family.

It localises to the endoplasmic reticulum membrane. Functionally, constituent of COPII-coated endoplasmic reticulum-derived transport vesicles. Required for efficient transport of a subset of secretory proteins to the Golgi. The C-terminal di-lysine motif is required for exit from the endoplasmic reticulum. Required directly for packaging glycosylated pro-alpha-factor into COPII vesicles. Facilitates retrograde transport from the Golgi to the endoplasmic reticulum. This chain is ER-derived vesicles protein ERV29 (ERV29), found in Saccharomyces cerevisiae (strain ATCC 204508 / S288c) (Baker's yeast).